Here is a 276-residue protein sequence, read N- to C-terminus: MQVQFSKMHGLGNDFVVIDNVTQNVFFSKEKISQLADRNFGIGFDQLLVVEPPYDPEQDFHYRIFNSDGSEVSQCGNGARCFARFVKMKGLTNRNKIVVSTKAGRIVLYHERDGQITVNMGEPIFEPAKIPLKANKQENIYIIRENDHTFFCGAVSMGNPHCVLLVDDVETADVEGIGKTLVAHERFPEGANIGFMQILNSGHIKLRVYERGVGETLACGSGACAAVAVGQMQKKLNKEVTVDLPGGTLKIRWQGPGSILKMTGTAEHVFDGNITL.

Asn-13, Gln-46, and Asn-66 together coordinate substrate. Cys-75 serves as the catalytic Proton donor. Residues 76–77 (GN), Asn-159, Asn-192, and 210–211 (ER) each bind substrate. Cys-219 serves as the catalytic Proton acceptor. Residue 220 to 221 (GS) coordinates substrate.

The protein belongs to the diaminopimelate epimerase family. Homodimer.

It localises to the cytoplasm. It catalyses the reaction (2S,6S)-2,6-diaminopimelate = meso-2,6-diaminopimelate. It functions in the pathway amino-acid biosynthesis; L-lysine biosynthesis via DAP pathway; DL-2,6-diaminopimelate from LL-2,6-diaminopimelate: step 1/1. In terms of biological role, catalyzes the stereoinversion of LL-2,6-diaminopimelate (L,L-DAP) to meso-diaminopimelate (meso-DAP), a precursor of L-lysine and an essential component of the bacterial peptidoglycan. The sequence is that of Diaminopimelate epimerase from Pseudoalteromonas atlantica (strain T6c / ATCC BAA-1087).